Reading from the N-terminus, the 359-residue chain is MGFIGKSVLVSLVALWCFTSSVFTEEVNHKTQTPSLAPAPAPYHHGHHHPHPPHHHHPHPHPHPHPPAKSPVKPPVKAPVSPPAKPPVKPPVYPPTKAPVKPPTKPPVKPPVSPPAKPPVKPPVYPPTKAPVKPPTKPPVKPPVYPPTKAPVKPPTKPPVKPPVYPPTKAPVKPPTKPPVKPPVSPPAKPPVKPPVYPPTKAPVKPPVSPPTKPPVTPPVYPPKFNRSLVAVRGTVYCKSCKYAAFNTLLGAKPIEGATVKLVCKSKKNITAETTTDKNGYFLLLAPKTVTNFGFRGCRVYLVKSKDYKCSKVSKLFGGDVGAELKPEKKLGKSTVVVNKLVYGLFNVGPFAFNPSCPK.

The signal sequence occupies residues 1-24; that stretch reads MGFIGKSVLVSLVALWCFTSSVFT. Residues 31-215 are disordered; that stretch reads TQTPSLAPAP…PPVSPPTKPP (185 aa). Basic residues predominate over residues 44 to 66; sequence HHGHHHPHPPHHHHPHPHPHPHP. Pro residues predominate over residues 67-215; it reads PAKSPVKPPV…PPVSPPTKPP (149 aa). Pro71, Pro75, Pro79, Pro82, Pro83, Pro87, Pro91, Pro95, Pro99, Pro103, Pro107, Pro111, Pro114, Pro115, Pro119, Pro123, Pro127, Pro131, Pro135, Pro139, Pro143, Pro147, Pro151, Pro155, Pro159, Pro163, Pro167, Pro171, Pro175, Pro179, Pro183, Pro186, Pro187, Pro191, Pro195, Pro199, Pro203, Pro207, Pro210, Pro211, Pro215, and Pro219 each carry 4-hydroxyproline. 42 O-linked (Ara...) hydroxyproline glycosylation sites follow: Pro71, Pro75, Pro79, Pro82, Pro83, Pro87, Pro91, Pro95, Pro99, Pro103, Pro107, Pro111, Pro114, Pro115, Pro119, Pro123, Pro127, Pro131, Pro135, Pro139, Pro143, Pro147, Pro151, Pro155, Pro159, Pro163, Pro167, Pro171, Pro175, Pro179, Pro183, Pro186, Pro187, Pro191, Pro195, Pro199, Pro203, Pro207, Pro210, Pro211, Pro215, and Pro219. The stretch at 90-109 is repeat 1; it reads PPVYPPTKAPVKPPTKPPVK. 3 consecutive repeat copies span residues 122–141, 142–161, and 162–181. N-linked (GlcNAc...) asparagine glycans are attached at residues Asn226 and Asn269.

It belongs to the non-classical AGP family. Hydroxylated on numerous prolines in the proline-rich region. Post-translationally, O-glycosylated on numerous hydroxyprolines in the proline-rich region; noncontiguous hydroxylproline residues are glycosylated with arabinogalactan. As to expression, expressed in vascular bundles of roots, leaves, sepals and stamen filaments, and pistils but not stigma.

It localises to the secreted. Its subcellular location is the cell wall. In terms of biological role, proteoglycan that may contribute to the strengthening of cell walls. The sequence is that of Non-classical arabinogalactan protein 31 from Arabidopsis thaliana (Mouse-ear cress).